The sequence spans 376 residues: Putative glutamate--cysteine ligase 2 (376 aa).

Belongs to the glutamate--cysteine ligase type 2 family. YbdK subfamily.

The enzyme catalyses L-cysteine + L-glutamate + ATP = gamma-L-glutamyl-L-cysteine + ADP + phosphate + H(+). ATP-dependent carboxylate-amine ligase which exhibits weak glutamate--cysteine ligase activity. This is Putative glutamate--cysteine ligase 2 from Paracoccus denitrificans (strain Pd 1222).